A 41-amino-acid chain; its full sequence is MKILNSLKTAKTRHPDCQIVRRKGKLYVICKSNPRFKARQR.

Belongs to the bacterial ribosomal protein bL36 family.

The polypeptide is Large ribosomal subunit protein bL36B (Actinobacillus pleuropneumoniae serotype 5b (strain L20)).